Reading from the N-terminus, the 454-residue chain is Bifunctional protein GlmU (454 aa).

Residues 1 to 233 (MTNRTCLAVI…RESAVGINNR (233 aa)) form a pyrophosphorylase region. UDP-N-acetyl-alpha-D-glucosamine-binding positions include 11–14 (LAAG), lysine 25, glutamine 79, and 84–85 (GT). Aspartate 109 contacts Mg(2+). Residues glycine 145, glutamate 159, asparagine 174, and asparagine 231 each coordinate UDP-N-acetyl-alpha-D-glucosamine. Mg(2+) is bound at residue asparagine 231. Residues 234–254 (AELAEAEAVWQQKRRRELMLS) form a linker region. Residues 255 to 454 (GVTLIAPETV…AEEKAKKSGG (200 aa)) are N-acetyltransferase. Residues arginine 320 and lysine 338 each coordinate UDP-N-acetyl-alpha-D-glucosamine. The active-site Proton acceptor is the histidine 350. Positions 353 and 364 each coordinate UDP-N-acetyl-alpha-D-glucosamine. Acetyl-CoA contacts are provided by residues alanine 367, 373–374 (NY), serine 410, and arginine 427.

It in the N-terminal section; belongs to the N-acetylglucosamine-1-phosphate uridyltransferase family. This sequence in the C-terminal section; belongs to the transferase hexapeptide repeat family. As to quaternary structure, homotrimer. Mg(2+) serves as cofactor.

Its subcellular location is the cytoplasm. The enzyme catalyses alpha-D-glucosamine 1-phosphate + acetyl-CoA = N-acetyl-alpha-D-glucosamine 1-phosphate + CoA + H(+). The catalysed reaction is N-acetyl-alpha-D-glucosamine 1-phosphate + UTP + H(+) = UDP-N-acetyl-alpha-D-glucosamine + diphosphate. It participates in nucleotide-sugar biosynthesis; UDP-N-acetyl-alpha-D-glucosamine biosynthesis; N-acetyl-alpha-D-glucosamine 1-phosphate from alpha-D-glucosamine 6-phosphate (route II): step 2/2. The protein operates within nucleotide-sugar biosynthesis; UDP-N-acetyl-alpha-D-glucosamine biosynthesis; UDP-N-acetyl-alpha-D-glucosamine from N-acetyl-alpha-D-glucosamine 1-phosphate: step 1/1. Its pathway is bacterial outer membrane biogenesis; LPS lipid A biosynthesis. Functionally, catalyzes the last two sequential reactions in the de novo biosynthetic pathway for UDP-N-acetylglucosamine (UDP-GlcNAc). The C-terminal domain catalyzes the transfer of acetyl group from acetyl coenzyme A to glucosamine-1-phosphate (GlcN-1-P) to produce N-acetylglucosamine-1-phosphate (GlcNAc-1-P), which is converted into UDP-GlcNAc by the transfer of uridine 5-monophosphate (from uridine 5-triphosphate), a reaction catalyzed by the N-terminal domain. The chain is Bifunctional protein GlmU from Chelativorans sp. (strain BNC1).